The following is a 132-amino-acid chain: Homeobox protein HD-4 (132 aa).

A DNA-binding region (homeobox) is located at residues 29–88 (GLSGYRYKTHIQVYVLTKIFEITQYPSHDTRQNLAILLNMSPRTIQIWFQNSRSVSRGAA). A disordered region spans residues 82-101 (SVSRGAAKKKVSKDNGPQEA).

Its subcellular location is the nucleus. This is Homeobox protein HD-4 (HD-4) from Encephalitozoon cuniculi (strain GB-M1) (Microsporidian parasite).